The sequence spans 721 residues: Polyribonucleotide nucleotidyltransferase (721 aa).

Residues Asp495 and Asp501 each contribute to the Mg(2+) site. The region spanning 562–621 (PRITTIKIRPERIKDIIGPGGKTIKDITARTGTSINIEDDGSVSIASPNQDKVEEAIKMI) is the KH domain. In terms of domain architecture, S1 motif spans 631–699 (GRIYMGTVRK…RSGKIRLSRK (69 aa)). Positions 699–721 (KEALADSAKKSEGTEPPKGEPAK) are disordered.

Belongs to the polyribonucleotide nucleotidyltransferase family. The cofactor is Mg(2+).

Its subcellular location is the cytoplasm. The enzyme catalyses RNA(n+1) + phosphate = RNA(n) + a ribonucleoside 5'-diphosphate. Functionally, involved in mRNA degradation. Catalyzes the phosphorolysis of single-stranded polyribonucleotides processively in the 3'- to 5'-direction. The sequence is that of Polyribonucleotide nucleotidyltransferase from Anaeromyxobacter dehalogenans (strain 2CP-C).